The chain runs to 327 residues: Phenylalanine--tRNA ligase alpha subunit (327 aa).

Glutamate 252 contacts Mg(2+).

It belongs to the class-II aminoacyl-tRNA synthetase family. Phe-tRNA synthetase alpha subunit type 1 subfamily. In terms of assembly, tetramer of two alpha and two beta subunits. Mg(2+) is required as a cofactor.

The protein localises to the cytoplasm. The enzyme catalyses tRNA(Phe) + L-phenylalanine + ATP = L-phenylalanyl-tRNA(Phe) + AMP + diphosphate + H(+). The chain is Phenylalanine--tRNA ligase alpha subunit from Shigella boydii serotype 18 (strain CDC 3083-94 / BS512).